We begin with the raw amino-acid sequence, 132 residues long: DNA-directed RNA polymerase subunit omega (132 aa).

It belongs to the RNA polymerase subunit omega family. In terms of assembly, the RNAP catalytic core consists of 2 alpha, 1 beta, 1 beta' and 1 omega subunit. When a sigma factor is associated with the core the holoenzyme is formed, which can initiate transcription.

The catalysed reaction is RNA(n) + a ribonucleoside 5'-triphosphate = RNA(n+1) + diphosphate. Its function is as follows. Promotes RNA polymerase assembly. Latches the N- and C-terminal regions of the beta' subunit thereby facilitating its interaction with the beta and alpha subunits. The protein is DNA-directed RNA polymerase subunit omega of Bartonella quintana (strain Toulouse) (Rochalimaea quintana).